The primary structure comprises 141 residues: Putative antiporter subunit mnhB2 (141 aa).

The next 4 membrane-spanning stretches (helical) occupy residues 10-30, 35-55, 70-90, and 116-136; these read TVTKIVVFILLTFGFYVFFAG, GGGFIGGLIFSSAFILMFLAF, KLMIVGAIISALTAIVPVFFG, and LFELGILLTVVGVIVTIMLAL.

The protein belongs to the CPA3 antiporters (TC 2.A.63) subunit B family. As to quaternary structure, may form a heterooligomeric complex that consists of seven subunits: mnhA2, mnhB2, mnhC2, mnhD2, mnhE2, mnhF2 and mnhG2.

It localises to the cell membrane. The chain is Putative antiporter subunit mnhB2 (mnhB2) from Staphylococcus haemolyticus (strain JCSC1435).